A 117-amino-acid polypeptide reads, in one-letter code: UPF0102 protein Rsph17029_0461 (117 aa).

It belongs to the UPF0102 family.

In Cereibacter sphaeroides (strain ATCC 17029 / ATH 2.4.9) (Rhodobacter sphaeroides), this protein is UPF0102 protein Rsph17029_0461.